A 120-amino-acid polypeptide reads, in one-letter code: UPF0295 protein Aflv_0370 (120 aa).

The next 2 membrane-spanning stretches (helical) occupy residues 12–32 (IRTFALSLIFIGFFVMYGGIF) and 42–62 (LFMILGLLFIIASTVVYFWIG).

It belongs to the UPF0295 family.

The protein localises to the cell membrane. This chain is UPF0295 protein Aflv_0370, found in Anoxybacillus flavithermus (strain DSM 21510 / WK1).